Consider the following 228-residue polypeptide: MINMTETKQLKLILIGDVNVGKTSILHRLIFSKFTEEYKSTIGADFLSKTFYQNDIITHIQLWDTAGQEKYWCLTSAFWRTSDAVILVFDISNESSFRNLNFWYKQFKSKSINPDGTEKQLPILLLANKSDSLTRAVDQSEINQWCTDHKVNLYYEVSAKSSINIKESILKLVEVIIEQDKDSDNEQFNDSPDEETSSITLLGTSKKHDNTNPNKPSTSSPSSCFNCK.

Position 16–23 (16–23) interacts with GTP; sequence GDVNVGKT. Positions 38–46 match the Effector region motif; sequence YKSTIGADF. GTP-binding positions include 64–68 and 128–131; these read DTAGQ and NKSD. Residues 183–228 form a disordered region; sequence SDNEQFNDSPDEETSSITLLGTSKKHDNTNPNKPSTSSPSSCFNCK. Residues 185-196 show a composition bias toward acidic residues; that stretch reads NEQFNDSPDEET. Residues 211–228 are compositionally biased toward low complexity; sequence TNPNKPSTSSPSSCFNCK. Cys-224 is lipidated: S-geranylgeranyl cysteine.

This sequence belongs to the small GTPase superfamily. Rab family.

The polypeptide is Ras-related protein Rab-32D (rab32D) (Dictyostelium discoideum (Social amoeba)).